A 181-amino-acid chain; its full sequence is Translationally-controlled tumor protein homolog (181 aa).

Residues 1–181 (MLIFKDAFTD…VKEALIEEKQ (181 aa)) enclose the TCTP domain.

This sequence belongs to the TCTP family.

The protein localises to the cytoplasm. In terms of biological role, involved in calcium binding and microtubule stabilization. The protein is Translationally-controlled tumor protein homolog of Brugia malayi (Filarial nematode worm).